Consider the following 558-residue polypeptide: Acylase ACY 1 proenzyme (558 aa).

T368 serves as the catalytic Nucleophile.

It belongs to the gamma-glutamyltransferase family. As to quaternary structure, dimer of two non-identical chains processed from the same precursor.

The enzyme catalyses (7R)-7-(4-carboxybutanamido)cephalosporanate + H2O = (7R)-7-aminocephalosporanate + glutarate. It carries out the reaction an N-terminal (5-L-glutamyl)-[peptide] + an alpha-amino acid = 5-L-glutamyl amino acid + an N-terminal L-alpha-aminoacyl-[peptide]. It catalyses the reaction glutathione + H2O = L-cysteinylglycine + L-glutamate. The catalysed reaction is an S-substituted glutathione + H2O = an S-substituted L-cysteinylglycine + L-glutamate. In terms of biological role, besides the cephalosporin acylase I activity which converts GL-7ACA into 7-ACA; this enzyme displays some gamma glutamyltranspeptidase activity. This is Acylase ACY 1 proenzyme (acyI) from Pseudomonas sp. (strain V22).